We begin with the raw amino-acid sequence, 129 residues long: Small ribosomal subunit protein bS6 (129 aa).

The segment covering 110-121 (FVRRDDERREDT) has biased composition (basic and acidic residues). The disordered stretch occupies residues 110–129 (FVRRDDERREDTVEAASSEE).

This sequence belongs to the bacterial ribosomal protein bS6 family.

Its function is as follows. Binds together with bS18 to 16S ribosomal RNA. In Aeromonas salmonicida (strain A449), this protein is Small ribosomal subunit protein bS6.